The following is a 612-amino-acid chain: Polyadenylation factor subunit 2 (612 aa).

Residues 1 to 21 (MAYEPRGDHGGGGGGQGQDGA) form a disordered region. WD repeat units lie at residues 93 to 132 (KIKH…FETI), 135 to 175 (AHDS…QSIN), 177 to 215 (HTDP…MESK), 218 to 257 (GHGW…CLTT), 260 to 300 (GHKS…DICL), 303 to 345 (GHEK…PGQS), and 373 to 412 (AHDY…DAEV). Disordered regions lie at residues 424 to 450 (AEAQ…MEDE), 486 to 514 (PPPP…GSLP), and 544 to 612 (PPPG…TRAR). Basic and acidic residues predominate over residues 430–442 (WDRRGGRRQRQEE). Pro residues-rich tracts occupy residues 486–506 (PPPP…PFPL) and 544–575 (PPPG…PPPM).

The protein localises to the nucleus. Functionally, required for 3'-end cleavage and polyadenylation of pre-mRNAs. Also involved in chromosome segregation where it has a role in chromosome attachment to the mitotic spindle. This chain is Polyadenylation factor subunit 2 (PFS2), found in Gibberella zeae (strain ATCC MYA-4620 / CBS 123657 / FGSC 9075 / NRRL 31084 / PH-1) (Wheat head blight fungus).